The primary structure comprises 371 residues: Alanine dehydrogenase (371 aa).

Residues Arg-15 and Lys-75 each coordinate substrate. His-96 (proton donor/acceptor) is an active-site residue. Residues Ser-134, Asp-198, Arg-203, Ser-220, 239–240, 267–270, Lys-279, and 298–301 each bind NAD(+); these read VL, VAID, and VANM. Asp-270 serves as the catalytic Proton donor/acceptor.

This sequence belongs to the AlaDH/PNT family. Requires Mg(2+) as cofactor.

The enzyme catalyses L-alanine + NAD(+) + H2O = pyruvate + NH4(+) + NADH + H(+). It functions in the pathway amino-acid degradation; L-alanine degradation via dehydrogenase pathway; NH(3) and pyruvate from L-alanine: step 1/1. Its function is as follows. Catalyzes the reversible reductive amination of pyruvate to L-alanine. The polypeptide is Alanine dehydrogenase (Halomonas elongata (strain ATCC 33173 / DSM 2581 / NBRC 15536 / NCIMB 2198 / 1H9)).